The sequence spans 238 residues: Ribosomal RNA small subunit methyltransferase G (238 aa).

S-adenosyl-L-methionine is bound by residues glycine 75, leucine 80, alanine 126–glutamate 127, and arginine 142.

This sequence belongs to the methyltransferase superfamily. RNA methyltransferase RsmG family.

Its subcellular location is the cytoplasm. Functionally, specifically methylates the N7 position of guanine in position 518 of 16S rRNA. The chain is Ribosomal RNA small subunit methyltransferase G from Streptomyces avermitilis (strain ATCC 31267 / DSM 46492 / JCM 5070 / NBRC 14893 / NCIMB 12804 / NRRL 8165 / MA-4680).